The chain runs to 145 residues: MSSSNLSSRKTRISAHFLDAAPAEDEIVTVEGWLTYYDEEKKSWIPLERAQVTIYVDGREVGKAETNEYGMFTFAFPAPYKGRHKLEVRFKGKAGYESSSKSLDFQVMEREQKLKLGRLARDVLLLIIALVFLLFVAIFITNMLR.

The signal sequence occupies residues 1–23 (MSSSNLSSRKTRISAHFLDAAPA). Residues 123-140 (VLLLIIALVFLLFVAIFI) traverse the membrane as a helical segment.

The protein resides in the membrane. This is an uncharacterized protein from Archaeoglobus fulgidus (strain ATCC 49558 / DSM 4304 / JCM 9628 / NBRC 100126 / VC-16).